We begin with the raw amino-acid sequence, 587 residues long: MSADPKVLLTDLIKTALKSVAPEHADTAILLERPKQASHGDFATNVALQLAKPLKRNPRELAALLLAELPASNLVAKTEVAGAGFINFTLAAAAKTAVVGEVLAKGADFGRGAKKNVKVQVEFVSANPTGPLHVGHGRGAAYGASLSDVLCFAGYDVTREYYVNDAGRQMDILALSTWLRYLALFGIDVPFPPNAYQGDYVIDMARGLRDAHQGRYAGVTLAQVLEGTPGLPVAERKDDEAKQQRELHLDGLIANAKRLLGEDYPFVHGFALNEQLGDGRDDLQEFGVHFDKWFSEKSLFDTGLVERAVAELEKRGHIYVQDGAKWFRSTDFGDEKDRVVQRENGLYTYFASDIAYHLNKYERGFDRIIDIWGADHHGYIPRVKGAIAALGLPPEKLEVALVQFAVLYRDGQKTSMSTRSGEFVTLRELRREVGNDACRFFYVLRKSDQHLDFDLDLAKSQSNENPVYYIQYAHARVCSVLNQWGGEPAELQAADLGKLENERELALCARLAGFPEVVQGAAADYAPHQIAFYLKDLAADFHSWYNAERMLVDDEAVKLARLALAAAVRSVLRGGLAVLGVSAPESM.

Positions 126–136 (ANPTGPLHVGH) match the 'HIGH' region motif.

The protein belongs to the class-I aminoacyl-tRNA synthetase family. As to quaternary structure, monomer.

Its subcellular location is the cytoplasm. It catalyses the reaction tRNA(Arg) + L-arginine + ATP = L-arginyl-tRNA(Arg) + AMP + diphosphate. The sequence is that of Arginine--tRNA ligase from Azoarcus sp. (strain BH72).